A 470-amino-acid chain; its full sequence is tRNA modification GTPase MnmE (470 aa).

Residues Arg30, Glu92, and Arg132 each contribute to the (6S)-5-formyl-5,6,7,8-tetrahydrofolate site. Residues 227-393 (GLQVALVGRP…LIKAVLKTCG (167 aa)) form the TrmE-type G domain. A K(+)-binding site is contributed by Asn237. Residues 237 to 242 (NVGKSS), 256 to 262 (TDLPGTT), 281 to 284 (DTAG), and 342 to 345 (NKAD) each bind GTP. Ser241 contacts Mg(2+). K(+)-binding residues include Thr256, Leu258, and Thr261. A Mg(2+)-binding site is contributed by Thr262. A (6S)-5-formyl-5,6,7,8-tetrahydrofolate-binding site is contributed by Lys470.

The protein belongs to the TRAFAC class TrmE-Era-EngA-EngB-Septin-like GTPase superfamily. TrmE GTPase family. As to quaternary structure, homodimer. Heterotetramer of two MnmE and two MnmG subunits. K(+) serves as cofactor.

The protein localises to the cytoplasm. In terms of biological role, exhibits a very high intrinsic GTPase hydrolysis rate. Involved in the addition of a carboxymethylaminomethyl (cmnm) group at the wobble position (U34) of certain tRNAs, forming tRNA-cmnm(5)s(2)U34. The polypeptide is tRNA modification GTPase MnmE (Prochlorococcus marinus (strain MIT 9313)).